A 26-amino-acid polypeptide reads, in one-letter code: Conotoxin reg6(gamma) (26 aa).

Positions 1–12 (RVLEPGXEDPDV) are enriched in acidic residues. Residues 1-26 (RVLEPGXEDPDVGEPAGEYEHHLLEX) form a disordered region. E4 is subject to 4-carboxyglutamate. The residue at position 5 (P5) is a 4-hydroxyproline. E8 carries the 4-carboxyglutamate modification. A 4-hydroxyproline modification is found at P10. At E14 the chain carries 4-carboxyglutamate. P15 carries the 4-hydroxyproline modification. Residues E18, E20, and E25 each carry the 4-carboxyglutamate modification.

As to expression, expressed by the venom duct.

It localises to the secreted. The polypeptide is Conotoxin reg6(gamma) (Conus regius (Crown cone)).